Reading from the N-terminus, the 271-residue chain is Putative phosphoenolpyruvate synthase regulatory protein (271 aa).

152–159 (GVSRCGKT) serves as a coordination point for ADP.

It belongs to the pyruvate, phosphate/water dikinase regulatory protein family. PSRP subfamily.

It carries out the reaction [pyruvate, water dikinase] + ADP = [pyruvate, water dikinase]-phosphate + AMP + H(+). The enzyme catalyses [pyruvate, water dikinase]-phosphate + phosphate + H(+) = [pyruvate, water dikinase] + diphosphate. Its function is as follows. Bifunctional serine/threonine kinase and phosphorylase involved in the regulation of the phosphoenolpyruvate synthase (PEPS) by catalyzing its phosphorylation/dephosphorylation. The polypeptide is Putative phosphoenolpyruvate synthase regulatory protein (Legionella pneumophila (strain Paris)).